Consider the following 295-residue polypeptide: Ethanolamine ammonia-lyase small subunit (295 aa).

Adenosylcob(III)alamin contacts are provided by valine 207, glutamate 228, and cysteine 258.

It belongs to the EutC family. In terms of assembly, the basic unit is a heterodimer which dimerizes to form tetramers. The heterotetramers trimerize; 6 large subunits form a core ring with 6 small subunits projecting outwards. Adenosylcob(III)alamin is required as a cofactor.

The protein resides in the bacterial microcompartment. It carries out the reaction ethanolamine = acetaldehyde + NH4(+). It functions in the pathway amine and polyamine degradation; ethanolamine degradation. Functionally, catalyzes the deamination of various vicinal amino-alcohols to oxo compounds. Allows this organism to utilize ethanolamine as the sole source of nitrogen and carbon in the presence of external vitamin B12. The sequence is that of Ethanolamine ammonia-lyase small subunit from Escherichia coli O157:H7.